A 623-amino-acid polypeptide reads, in one-letter code: V-type proton ATPase catalytic subunit A (623 aa).

252–259 serves as a coordination point for ATP; it reads GAFGCGKT.

This sequence belongs to the ATPase alpha/beta chains family. As to quaternary structure, V-ATPase is a heteromultimeric enzyme composed of a peripheral catalytic V1 complex (main components: subunits A, B, C, D, E, and F) attached to an integral membrane V0 proton pore complex (main component: the proteolipid protein).

The catalysed reaction is ATP + H2O + 4 H(+)(in) = ADP + phosphate + 5 H(+)(out). Its function is as follows. Catalytic subunit of the peripheral V1 complex of vacuolar ATPase. V-ATPase vacuolar ATPase is responsible for acidifying a variety of intracellular compartments in eukaryotic cells. This Gossypium hirsutum (Upland cotton) protein is V-type proton ATPase catalytic subunit A (CVA69.24).